The sequence spans 440 residues: Gap junction gamma-2 protein (440 aa).

At 1–21 (MTNMSWSFLTRLLEEIHNHST) the chain is on the cytoplasmic side. A helical membrane pass occupies residues 22-42 (FVGKVWLTVLVVFRIVLTAVG). Residues 43 to 78 (GESIYSDEQSKFTCNTRQPGCDNVCYDAFAPLSHVR) lie on the Extracellular side of the membrane. Residues 79-99 (FWVFQIVVISTPSVMYLGYAV) form a helical membrane-spanning segment. Residues 100 to 223 (HRLARASEQE…AQLVVRAAFE (124 aa)) are Cytoplasmic-facing. Positions 108 to 199 (QERRRALRRR…TPGPAGQHDG (92 aa)) are disordered. A compositionally biased stretch (basic residues) spans 112–124 (RALRRRPGPRRLP). Positions 150 to 173 (LEEDEDEEPGAPEGPGEDTEEERT) are enriched in acidic residues. Residues 224-244 (VAFLVGQYLLYGFEVPPFFAC) traverse the membrane as a helical segment. The Extracellular portion of the chain corresponds to 245–264 (SRQPCPHVVDCFVSRPTEKT). A helical transmembrane segment spans residues 265–285 (VFLLVMYVVSCLCLLLNLCEM). The Cytoplasmic portion of the chain corresponds to 286–440 (AHLGLGSAQD…SRDGKATVWI (155 aa)). The disordered stretch occupies residues 368 to 440 (ADRDSPPCSG…SRDGKATVWI (73 aa)). At S372 the chain carries Phosphoserine. Residues 380 to 401 (ATSRGPPRAGGPASGTGSATSG) are compositionally biased toward low complexity.

The protein belongs to the connexin family. Gamma-type subfamily. A connexon is composed of a hexamer of connexins. Interacts with TJP1. In terms of tissue distribution, mainly expressed by oligodendrocytes in the central nervous system. Expressed in optic nerve (at protein level).

Its subcellular location is the cell membrane. It is found in the cell junction. The protein localises to the gap junction. One gap junction consists of a cluster of closely packed pairs of transmembrane channels, the connexons, through which materials of low MW diffuse from one cell to a neighboring cell. May play a role in myelination in central and peripheral nervous systems. The chain is Gap junction gamma-2 protein (Gjc2) from Rattus norvegicus (Rat).